We begin with the raw amino-acid sequence, 601 residues long: Secretogranin-2 (601 aa).

A signal peptide spans 1 to 30 (MSSQRNYCLAGCLSSCILVILMSFSDAASF). Residues 89–109 (EQKDTQALSTDTAKSPTSDDE) form a disordered region. A compositionally biased stretch (polar residues) spans 93-104 (TQALSTDTAKSP). Position 151 is a sulfotyrosine (Tyr151). Residues 258 to 273 (VESQTQEELKESKEEV) show a composition bias toward basic and acidic residues. Positions 258-307 (VESQTQEELKESKEEVEKTDDMEDEIKRSGLLGLQDEEPEKDTKEQESEN) are disordered.

This sequence belongs to the chromogranin/secretogranin protein family.

It is found in the secreted. Its function is as follows. Neuroendocrine protein of the granin family that regulates the biogenesis of secretory granules. This chain is Secretogranin-2, found in Pelophylax ridibundus (Marsh frog).